We begin with the raw amino-acid sequence, 933 residues long: Clumping factor A (933 aa).

An N-terminal signal peptide occupies residues 1 to 39; the sequence is MNMKKKEKHAIRKKSIGVASVLVGTLIGFGLLSSKEADA. Positions 9 to 20 match the YSIRK-G/S signaling motif motif; it reads HAIRKKSIGVAS. 2 disordered regions span residues 34–200 and 529–904; these read SKEA…SNKD and FNNG…SEDE. The ligand binding A region stretch occupies residues 40-542; it reads SENSVTQSDS…SGSGDGIDKP (503 aa). Positions 47-65 are enriched in low complexity; sequence SDSASNESKSNDSSSVSAA. Residues 71 to 105 are compositionally biased toward polar residues; sequence TNVSDTKTSSNTNNGETSVAQNPAQQETTQSSSTN. Positions 106–132 are enriched in low complexity; the sequence is ATTEETPVTGEATTTTTNQANTPATTQ. A compositionally biased stretch (polar residues) spans 133 to 200; sequence SSNTNAEELV…PQSTDASNKD (68 aa). Over residues 547–565 the composition is skewed to acidic residues; the sequence is QPDEPGEIEPIPEDSDSDP. Low complexity predominate over residues 566-598; that stretch reads GSDSGSDSNSDSGSDSGSDSTSDSGSDSASDSD. Over residues 599–861 the composition is skewed to acidic residues; that stretch reads SASDSDSASD…DSDSESDSNS (263 aa). Positions 862–880 are enriched in low complexity; that stretch reads DSESGSNNNVVPPNSPKNG. Over residues 887 to 896 the composition is skewed to basic and acidic residues; the sequence is NEAKDSKEPL. The LPXTG sorting signal motif lies at 896–900; the sequence is LPDTG. Threonine 899 is modified (pentaglycyl murein peptidoglycan amidated threonine). Positions 900–933 are cleaved as a propeptide — removed by sortase; sequence GSEDEANTSLIWGLLASIGSLLLFRRKKENKDKK.

This sequence belongs to the serine-aspartate repeat-containing protein (SDr) family.

Its subcellular location is the secreted. It is found in the cell wall. Cell surface-associated protein implicated in virulence. Promotes bacterial attachment exclusively to the gamma-chain of human fibrinogen. Induces formation of bacterial clumps, which diminish the ability of group IIA phospholipase A2 to cause bacterial phospholipid hydrolysis and killing. Significantly decreases macrophage phagocytosis possibly thanks to the clumps, clumped bacteria being too large to be phagocytosed. Dominant factor responsible for human platelet aggregation, which may be an important mechanism for initiating infective endocarditis. Enhances spleen cell proliferative response in vitro, contributing significantly to the immunostimulatory activity of S.aureus. The sequence is that of Clumping factor A (clfA) from Staphylococcus aureus (strain Newman).